Reading from the N-terminus, the 396-residue chain is Purine ribonucleoside efflux pump NepI (396 aa).

The Cytoplasmic segment spans residues 1–21 (MSEFIAENRGADAITRPNWSA). A helical membrane pass occupies residues 22–42 (VFSVAFCVACLIIVEFLPVSL). The Periplasmic portion of the chain corresponds to 43–54 (LTPMAQDLGISE). Residues 55–75 (GVAGQSVTVTAFVAMFASLFI) form a helical membrane-spanning segment. At 76–85 (TQTIQATDRR) the chain is on the cytoplasmic side. Residues 86–106 (NVVILFAVLLTLSCLLVSFAN) traverse the membrane as a helical segment. Residue serine 107 is a topological domain, periplasmic. The chain crosses the membrane as a helical span at residues 108-128 (FSLLLIGRACLGLALGGFWAM). Topologically, residues 129-147 (SASLTMRLVPPRTVPKALS) are cytoplasmic. Residues 148 to 168 (VIFGAVSIALVIAAPLGSFLG) traverse the membrane as a helical segment. The Periplasmic portion of the chain corresponds to 169–175 (ELIGWRN). A helical membrane pass occupies residues 176 to 196 (VFNAAAVMGVLCIFWIIKSLP). Residues 197 to 215 (SLPGEPSHQKQNTFRLLQR) are Cytoplasmic-facing. A helical membrane pass occupies residues 216–236 (PGVMAGMIAIFMSFAGQFAFF). The Periplasmic portion of the chain corresponds to 237 to 255 (TYIRPVYMNLAGFSVDGLT). A helical membrane pass occupies residues 256–276 (LVLLSFGIASFIGTSLSSFIL). The Cytoplasmic segment spans residues 277-281 (KRSVK). Residues 282–302 (LALAGAPLILAVSALVLTLWG) form a helical membrane-spanning segment. At 303–305 (SDK) the chain is on the periplasmic side. Residues 306 to 326 (IVATGVAIIWGLTFALVPVGW) traverse the membrane as a helical segment. At 327–343 (STWITRSLADQAEKAGS) the chain is on the cytoplasmic side. Residues 344 to 364 (IQVAVIQLANTCGAAIGGYAL) traverse the membrane as a helical segment. At 365–366 (DN) the chain is on the periplasmic side. The helical transmembrane segment at 367–387 (IGLTSPLMFSGTLMLLTALLV) threads the bilayer. Residues 388 to 396 (TAKVKMKKS) lie on the Cytoplasmic side of the membrane.

Belongs to the major facilitator superfamily. DHA1 family. NepI (TC 2.A.1.2.26) subfamily.

Its subcellular location is the cell inner membrane. It carries out the reaction inosine(in) + H(+)(out) = inosine(out) + H(+)(in). It catalyses the reaction guanosine(in) + H(+)(out) = guanosine(out) + H(+)(in). Functionally, involved in the efflux of purine ribonucleosides, such as inosine and guanosine. In Shigella sonnei (strain Ss046), this protein is Purine ribonucleoside efflux pump NepI.